Reading from the N-terminus, the 327-residue chain is Flotillin-like protein FloA (327 aa).

2 helical membrane-spanning segments follow: residues 6–26 and 28–48; these read VLFF…FTFV and IMLW…TLVG.

This sequence belongs to the flotillin-like FloA family. In terms of assembly, homooligomerizes.

The protein localises to the cell membrane. The protein resides in the membrane raft. Functionally, found in functional membrane microdomains (FMM) that may be equivalent to eukaryotic membrane rafts. FMMs are highly dynamic and increase in number as cells age. Flotillins are thought to be important factors in membrane fluidity. The sequence is that of Flotillin-like protein FloA from Priestia megaterium (strain DSM 319 / IMG 1521) (Bacillus megaterium).